Consider the following 151-residue polypeptide: MTVLYIDADACPVKDEVYKVAARYGLKTFVVSNSWIRVPLTPAIEQIVVDAGPDIADDWIAERAGPGDVVITNDIPLADRVLKAGGAALGTTGRLFTVDTIGSALASRMIGEHLRSMGEITSGPKAFGPADRSKFLQALDTAVVKARRVVR.

It belongs to the UPF0178 family.

The protein is UPF0178 protein Caul_3070 of Caulobacter sp. (strain K31).